The following is a 306-amino-acid chain: 4-hydroxy-tetrahydrodipicolinate synthase (306 aa).

Threonine 49 is a pyruvate binding site. The Proton donor/acceptor role is filled by tyrosine 136. The active-site Schiff-base intermediate with substrate is the lysine 164. Residue isoleucine 207 participates in pyruvate binding.

This sequence belongs to the DapA family. In terms of assembly, homotetramer; dimer of dimers.

The protein resides in the cytoplasm. It carries out the reaction L-aspartate 4-semialdehyde + pyruvate = (2S,4S)-4-hydroxy-2,3,4,5-tetrahydrodipicolinate + H2O + H(+). It participates in amino-acid biosynthesis; L-lysine biosynthesis via DAP pathway; (S)-tetrahydrodipicolinate from L-aspartate: step 3/4. Catalyzes the condensation of (S)-aspartate-beta-semialdehyde [(S)-ASA] and pyruvate to 4-hydroxy-tetrahydrodipicolinate (HTPA). This chain is 4-hydroxy-tetrahydrodipicolinate synthase, found in Haloarcula marismortui (strain ATCC 43049 / DSM 3752 / JCM 8966 / VKM B-1809) (Halobacterium marismortui).